The sequence spans 428 residues: Sulfite exporter TauE/SafE family protein 6 (428 aa).

Transmembrane regions (helical) follow at residues 1–21 (MKTL…NANQ), 61–81 (ALVV…ASGI), 82–102 (GDGF…LKAA), 105–125 (FSAF…HFGC), 128–148 (LIDY…VSVG), 149–169 (VICN…VFLM), 245–265 (YWIL…LALS), 294–314 (VMSF…GMII), 332–352 (TSFM…LLGM), 356–376 (EAAY…LVFA), and 388–408 (IIVF…ASFG).

This sequence belongs to the 4-toluene sulfonate uptake permease (TSUP) (TC 2.A.102) family.

The protein resides in the membrane. In Arabidopsis thaliana (Mouse-ear cress), this protein is Sulfite exporter TauE/SafE family protein 6.